The primary structure comprises 464 residues: Isthmin-1 (464 aa).

Positions 1-29 (MVRLAAELLLLLGLLLLTLHITVLRGSGA) are cleaved as a signal peptide. N-linked (GlcNAc...) asparagine glycosylation occurs at N39. Disordered stretches follow at residues 50 to 98 (NVGS…LQRD), 135 to 155 (PDSEADKDQHPENKPSWSVPS), and 173 to 219 (SGDQ…STDG). A compositionally biased stretch (polar residues) spans 51–63 (VGSDTTSETSFSL). Composition is skewed to basic and acidic residues over residues 66–76 (EAPREHLDHQA) and 138–147 (EADKDQHPEN). Residues 218-262 (DGEGDWSLWSVCSVTCGNGNQKRTRSCGYACTATESRTCDRPNCP) enclose the TSP type-1 domain. 3 cysteine pairs are disulfide-bonded: C229-C256, C233-C261, and C244-C248. An AMOP domain is found at 289–452 (LFEVDTDSCE…QKCTESPSDE (164 aa)).

It belongs to the isthmin family. Interacts with integrin ITGAV/ITGB5.

Its subcellular location is the secreted. Its function is as follows. Acts as an angiogenesis inhibitor. The sequence is that of Isthmin-1 (ISM1) from Homo sapiens (Human).